The chain runs to 450 residues: tRNA modification GTPase MnmE (450 aa).

R23, E79, and K118 together coordinate (6S)-5-formyl-5,6,7,8-tetrahydrofolate. The TrmE-type G domain maps to G214–G374. N224 is a binding site for K(+). Residues N224 to S229, T243 to T249, and D268 to G271 each bind GTP. S228 provides a ligand contact to Mg(2+). Positions 243, 245, and 248 each coordinate K(+). T249 provides a ligand contact to Mg(2+). K450 serves as a coordination point for (6S)-5-formyl-5,6,7,8-tetrahydrofolate.

Belongs to the TRAFAC class TrmE-Era-EngA-EngB-Septin-like GTPase superfamily. TrmE GTPase family. As to quaternary structure, homodimer. Heterotetramer of two MnmE and two MnmG subunits. The cofactor is K(+).

Its subcellular location is the cytoplasm. In terms of biological role, exhibits a very high intrinsic GTPase hydrolysis rate. Involved in the addition of a carboxymethylaminomethyl (cmnm) group at the wobble position (U34) of certain tRNAs, forming tRNA-cmnm(5)s(2)U34. The polypeptide is tRNA modification GTPase MnmE (Francisella philomiragia subsp. philomiragia (strain ATCC 25017 / CCUG 19701 / FSC 153 / O#319-036)).